The sequence spans 236 residues: MTKSQGFQFKQFFIAHDKCAMKVNTDGILLGAIADIRHKRQILDLGTGTGLVAIMLAQRTDENTRISALELEPNAYRQAVENCRNSAFSDRLQVYQGDVLDYHFHQKFDLIVSNPPYFSESLASRSYERDLARAATQSHLDWLLQAKKWLAEQGEISFILPFEAAEKLVEQSRTSGLFCTKICKIITKQGQAAKRMIVSFSAQNVPLEEQELVIYDADNQYTEAFKQLTKAFYLNM.

Belongs to the methyltransferase superfamily. tRNA (adenine-N(6)-)-methyltransferase family.

Its subcellular location is the cytoplasm. The enzyme catalyses adenosine(37) in tRNA1(Val) + S-adenosyl-L-methionine = N(6)-methyladenosine(37) in tRNA1(Val) + S-adenosyl-L-homocysteine + H(+). In terms of biological role, specifically methylates the adenine in position 37 of tRNA(1)(Val) (anticodon cmo5UAC). The sequence is that of tRNA1(Val) (adenine(37)-N6)-methyltransferase from Actinobacillus pleuropneumoniae serotype 7 (strain AP76).